Consider the following 119-residue polypeptide: Ribonuclease P protein component (119 aa).

This sequence belongs to the RnpA family. Consists of a catalytic RNA component (M1 or rnpB) and a protein subunit.

It carries out the reaction Endonucleolytic cleavage of RNA, removing 5'-extranucleotides from tRNA precursor.. RNaseP catalyzes the removal of the 5'-leader sequence from pre-tRNA to produce the mature 5'-terminus. It can also cleave other RNA substrates such as 4.5S RNA. The protein component plays an auxiliary but essential role in vivo by binding to the 5'-leader sequence and broadening the substrate specificity of the ribozyme. The protein is Ribonuclease P protein component of Coprothermobacter proteolyticus (strain ATCC 35245 / DSM 5265 / OCM 4 / BT).